A 420-amino-acid polypeptide reads, in one-letter code: ATP phosphoribosyltransferase regulatory subunit (420 aa).

The protein belongs to the class-II aminoacyl-tRNA synthetase family. HisZ subfamily. Heteromultimer composed of HisG and HisZ subunits.

The protein resides in the cytoplasm. It participates in amino-acid biosynthesis; L-histidine biosynthesis; L-histidine from 5-phospho-alpha-D-ribose 1-diphosphate: step 1/9. Required for the first step of histidine biosynthesis. May allow the feedback regulation of ATP phosphoribosyltransferase activity by histidine. The polypeptide is ATP phosphoribosyltransferase regulatory subunit (Bacillus cereus (strain G9842)).